Reading from the N-terminus, the 75-residue chain is Small ribosomal subunit protein bS18 (75 aa).

It belongs to the bacterial ribosomal protein bS18 family. As to quaternary structure, part of the 30S ribosomal subunit. Forms a tight heterodimer with protein bS6.

Functionally, binds as a heterodimer with protein bS6 to the central domain of the 16S rRNA, where it helps stabilize the platform of the 30S subunit. The polypeptide is Small ribosomal subunit protein bS18 (Idiomarina loihiensis (strain ATCC BAA-735 / DSM 15497 / L2-TR)).